We begin with the raw amino-acid sequence, 465 residues long: MAKKAPDVGDYKYGFHDEDVSIFRSERGLTENIVREISKMKEEPEWMLDFRLKALKLFYKMPMPQWGGDLSELNFDDITYYVKPSEHTQRSWDEVPEEIKRTFDKLGIPEAEQKYLAGVSAQYESEVVYHNMEKELEEKGIIFKDTDSALRENEELFKEYFASVVPAADNKFAALNSAVWSGGSFIYVPKNVKLDTPLQAYFRINSENMGQFERTLIIADEGASVNYVEGCTAPVYTTSSLHSAVVEIIVHKDAHVRYTTIQNWANNVYNLVTKRTFVHENGNMEWVDGNLGSKLTMKYPNCVLLGEGAKGSTLSIAFAGKGQVQDAGAKMIHKAPNTSSTIVSKSISKNGGKVIYRGIVHFGRKAKGARSNIECDTLILDNESTSDTIPYNEVFNDNISLEHEAKVSKVSEEQLFYLMSRGISEEEATEMIVMGFIEPFTKELPMEYAVEMNRLIKFEMEGSIG.

This sequence belongs to the iron-sulfur cluster assembly SufBD family.

The chain is Iron-sulfur cluster assembly SufBD family protein SH2035 from Staphylococcus haemolyticus (strain JCSC1435).